Consider the following 387-residue polypeptide: Sulfopyruvate decarboxylase (387 aa).

The protein belongs to the TPP enzyme family. The cofactor is thiamine diphosphate.

The catalysed reaction is 3-sulfopyruvate + H(+) = sulfoacetaldehyde + CO2. The protein operates within cofactor biosynthesis; coenzyme M biosynthesis. Involved in the biosynthesis of the coenzyme M (2-mercaptoethanesulfonic acid). Catalyzes the decarboxylation of sulfopyruvate to sulfoacetaldehyde. Is not able to decarboxylate the analogous compounds 2-oxoglutarate or 2-oxosuberate. In Methanosarcina acetivorans (strain ATCC 35395 / DSM 2834 / JCM 12185 / C2A), this protein is Sulfopyruvate decarboxylase.